We begin with the raw amino-acid sequence, 192 residues long: UPF0301 protein Rru_A3059 (192 aa).

This sequence belongs to the UPF0301 (AlgH) family.

The polypeptide is UPF0301 protein Rru_A3059 (Rhodospirillum rubrum (strain ATCC 11170 / ATH 1.1.1 / DSM 467 / LMG 4362 / NCIMB 8255 / S1)).